Reading from the N-terminus, the 121-residue chain is Large ribosomal subunit protein bL12 (121 aa).

This sequence belongs to the bacterial ribosomal protein bL12 family. As to quaternary structure, homodimer. Part of the ribosomal stalk of the 50S ribosomal subunit. Forms a multimeric L10(L12)X complex, where L10 forms an elongated spine to which 2 to 4 L12 dimers bind in a sequential fashion. Binds GTP-bound translation factors.

Forms part of the ribosomal stalk which helps the ribosome interact with GTP-bound translation factors. Is thus essential for accurate translation. This Baumannia cicadellinicola subsp. Homalodisca coagulata protein is Large ribosomal subunit protein bL12.